A 221-amino-acid polypeptide reads, in one-letter code: MAEITQIQVESHVFPPEVKPPGSDKTFFLGGAGVRGLEIQGKFIKFTAIAVYIEDDAVSSLAVKWKGKTADELTDSVDFFKDIVTGPFEKFTQVTMILPLTGQQYSEKVVENCVAHWKSVGTYTDAESEATQKFLQVFKNVSNPPGASILFTQSPLGSLTISFSKDGSLPENGKEVIVNKQLSEAVLQSIIGKHGVSPEAKKSLSARLSDLINQHENPKKE.

Substrate contacts are provided by T47, N112, and S189.

The protein belongs to the chalcone isomerase family.

It catalyses the reaction a chalcone = a flavanone.. It functions in the pathway secondary metabolite biosynthesis; flavonoid biosynthesis. Its function is as follows. Catalyzes the intramolecular cyclization of bicyclic chalcones into tricyclic (S)-flavanones. Responsible for the isomerization of 4,2',4',6'-tetrahydroxychalcone (also termed chalcone) into naringenin. The chain is Chalcone--flavanone isomerase (CHI) from Dianthus caryophyllus (Carnation).